A 631-amino-acid polypeptide reads, in one-letter code: Leukocyte immunoglobulin-like receptor subfamily B member 3 (631 aa).

Residues 1 to 23 (MTPALTALLCLGLSLGPRTRVQA) form the signal peptide. The Extracellular portion of the chain corresponds to 24–443 (GPFPKPTLWA…STPGLGRYLE (420 aa)). Ig-like C2-type domains are found at residues 42-100 (GSPV…RCHY), 111-229 (DPLE…SLLT), 225-314 (PSLL…DPLN), and 338-419 (GENV…LVVS). Cysteines 49 and 98 form a disulfide. The segment covering 59 to 70 (RLHKEGSPEPLD) has biased composition (basic and acidic residues). The segment at 59–78 (RLHKEGSPEPLDRNNPLEPK) is disordered. Asn-139 carries N-linked (GlcNAc...) asparagine glycosylation. Disulfide bonds link Cys-144–Cys-196 and Cys-245–Cys-296. Residues Asn-280, Asn-301, and Asn-340 are each glycosylated (N-linked (GlcNAc...) asparagine). The cysteines at positions 345 and 396 are disulfide-linked. A helical membrane pass occupies residues 444-464 (VLIGVSVAFVLLLFLLLFLLL). Residues 465–631 (RRQRHSKHRT…PSIYATLAIH (167 aa)) are Cytoplasmic-facing. Positions 470–631 (SKHRTSDQRK…PSIYATLAIH (162 aa)) are disordered. Positions 473-482 (RTSDQRKTDF) are enriched in basic and acidic residues. The ITIM motif 1 signature appears at 512-517 (NLYAAV). Composition is skewed to basic and acidic residues over residues 520 to 537 (TQSE…HDED) and 567 to 581 (LDTK…RQMD). Over residues 588-600 (EASQDVTYAQLHS) the composition is skewed to polar residues. 2 consecutive short sequence motifs (ITIM motif) follow at residues 593-598 (VTYAQL) and 623-628 (SIYATL). Phosphotyrosine; by LYN is present on residues Tyr-595 and Tyr-625.

As to quaternary structure, interacts with LYN, PTPN6/SHP-1 and PTPN11/SHP-2. Post-translationally, phosphorylated on tyrosine residues by LYN. Phosphorylation at Tyr-595 and Tyr-625 is important for interaction with PTPN6/SHP-1 and PTPN11/SHP-2. Detected in monocytes and B-cells.

The protein resides in the cell membrane. Its function is as follows. May act as receptor for class I MHC antigens. Becomes activated upon coligation of LILRB3 and immune receptors, such as FCGR2B and the B-cell receptor. Down-regulates antigen-induced B-cell activation by recruiting phosphatases to its immunoreceptor tyrosine-based inhibitor motifs (ITIM). This Homo sapiens (Human) protein is Leukocyte immunoglobulin-like receptor subfamily B member 3 (LILRB3).